We begin with the raw amino-acid sequence, 1428 residues long: DNA topoisomerase 2 (1428 aa).

Residues N70, N99, 127–129 (SSN), and 140–147 (GRNGYGAK) each bind ATP. Residues 333 to 336 (KKKK) form an interaction with DNA region. 365–367 (QTK) contributes to the ATP binding site. One can recognise a Toprim domain in the interval 443-557 (CTLVLTEGDS…GLLDIQGFLL (115 aa)). 3 residues coordinate Mg(2+): E449, D526, and D528. The Topo IIA-type catalytic domain occupies 692-1159 (IPNVLDGFKP…SAKDIWNTDL (468 aa)). Y782 functions as the O-(5'-phospho-DNA)-tyrosine intermediate in the catalytic mechanism. The segment at 965–974 (KLISPISLMN) is interaction with DNA. 4 disordered regions span residues 1083-1102 (KGATSDEEDEESSHEDTENV), 1176-1217 (ARGG…RKGK), 1240-1288 (KAPT…ELSK), and 1303-1428 (MGST…NEED). The residue at position 1086 (T1086) is a Phosphothreonine; by CK2. Position 1087 is a phosphoserine; by CK2 (S1087). Positions 1207–1217 (KNKKSTARKGK) are enriched in basic residues. A Phosphoserine modification is found at S1252. A Phosphothreonine; by CK2 modification is found at T1258. Residues S1266, S1269, and S1272 each carry the phosphoserine; by CK2 modification. A compositionally biased stretch (basic and acidic residues) spans 1275–1286 (DIKKEDKDEGEL). Residues 1332 to 1347 (TAVKPKLAKKPVRKQQ) show a composition bias toward basic residues. Phosphoserine; by CK2 occurs at positions 1353, 1356, 1408, and 1423. A compositionally biased stretch (acidic residues) spans 1403 to 1428 (ELSDDSFIEDDEEENQGSDVSFNEED).

Belongs to the type II topoisomerase family. In terms of assembly, homodimer. Mg(2+) serves as cofactor. Mn(2+) is required as a cofactor. It depends on Ca(2+) as a cofactor. Phosphorylation enhances the activity. Stimulates decatenation activity.

It is found in the nucleus. It catalyses the reaction ATP-dependent breakage, passage and rejoining of double-stranded DNA.. In terms of biological role, control of topological states of DNA by transient breakage and subsequent rejoining of DNA strands. Topoisomerase II makes double-strand breaks. Essential during mitosis and meiosis for proper segregation of daughter chromosomes. This chain is DNA topoisomerase 2 (TOP2), found in Saccharomyces cerevisiae (strain ATCC 204508 / S288c) (Baker's yeast).